The chain runs to 688 residues: Collagen alpha-2(IX) chain (688 aa).

The signal sequence occupies residues 1–22 (MTAVPAPRSLFVLLQVLWLALA). Residues 26-162 (GPPGEPGPPG…PGKPGRPGTI (137 aa)) form a triple-helical region 4 (COL4) region. The disordered stretch occupies residues 26 to 171 (GPPGEPGPPG…IQGLEGSADF (146 aa)). Pro residues-rich tracts occupy residues 28 to 42 (PGEP…PPGV) and 105 to 126 (LPGP…PGPV). Positions 128–137 (LPGEIGTPGP) are enriched in low complexity. The segment covering 138 to 156 (KGDPGPEGPSGPPGPPGKP) has biased composition (pro residues). Position 159 is a 4-hydroxyproline (Pro-159). The interval 163–179 (QGLEGSADFLCPTNCPA) is nonhelical region 4 (NC4). Ser-168 carries an O-linked (Xyl...) (glycosaminoglycan) serine glycan. The interval 180–518 (GVKGPQGLQG…PGRQGVVGRA (339 aa)) is triple-helical region 3 (COL3). 5-hydroxylysine is present on Lys-182. O-linked (Gal...) hydroxylysine glycosylation is present at Lys-182. The disordered stretch occupies residues 183-517 (GPQGLQGVKG…QPGRQGVVGR (335 aa)). 2 stretches are compositionally biased toward low complexity: residues 289 to 314 (PQGI…PGIP) and 392 to 412 (RGPV…EQGP). The segment covering 435–444 (GPRGGVGDPG) has biased composition (gly residues). Low complexity predominate over residues 502-517 (DRGVPGQPGRQGVVGR). The interval 519–548 (ASDQHIVDVVLKMIQEQLAEVAVSAKREAL) is nonhelical region 3 (NC3). The triple-helical region 2 (COL2) stretch occupies residues 549–631 (GAAGMVGLPG…PGLPGRPGQA (83 aa)). Positions 553-664 (MVGLPGPPGP…GPVGLPGFCE (112 aa)) are disordered. Residues 598-610 (KRGEKGDRGEMGH) are compositionally biased toward basic and acidic residues. A nonhelical region 2 (NC2) region spans residues 632–633 (IN). A triple-helical region 1 (COL1) region spans residues 634 to 663 (GKDGDRGSPGAPGEAGRPGRPGPVGLPGFC). Positions 664–688 (EPAACLGASAYTSARLTEPGSIKGP) are nonhelical region 1 (NC1).

The protein belongs to the fibril-associated collagens with interrupted helices (FACIT) family. In terms of assembly, heterotrimer of an alpha 1(IX), an alpha 2(IX) and an alpha 3(IX) chain. The chains are linked to each other by interchain disulfide bonds. Trimers are also cross-linked via hydroxylysines. Post-translationally, covalently linked to the telopeptides of type II collagen by lysine-derived cross-links. In terms of processing, prolines at the third position of the tripeptide repeating unit (G-X-Y) are hydroxylated in some or all of the chains.

Its subcellular location is the secreted. The protein localises to the extracellular space. It localises to the extracellular matrix. Structural component of hyaline cartilage and vitreous of the eye. This is Collagen alpha-2(IX) chain (Col9a2) from Mus musculus (Mouse).